The following is a 332-amino-acid chain: 3-dehydroquinate synthase (332 aa).

NAD(+) contacts are provided by residues 55–60, 89–93, 113–114, Lys-126, Lys-134, and 152–155; these read DGEEYK, GVITD, TT, and TLST. Glu-167, His-226, and His-242 together coordinate Zn(2+).

The protein belongs to the sugar phosphate cyclases superfamily. Dehydroquinate synthase family. The cofactor is NAD(+). Co(2+) serves as cofactor. Requires Zn(2+) as cofactor.

The protein resides in the cytoplasm. It catalyses the reaction 7-phospho-2-dehydro-3-deoxy-D-arabino-heptonate = 3-dehydroquinate + phosphate. Its pathway is metabolic intermediate biosynthesis; chorismate biosynthesis; chorismate from D-erythrose 4-phosphate and phosphoenolpyruvate: step 2/7. Its function is as follows. Catalyzes the conversion of 3-deoxy-D-arabino-heptulosonate 7-phosphate (DAHP) to dehydroquinate (DHQ). In Pyrococcus abyssi (strain GE5 / Orsay), this protein is 3-dehydroquinate synthase.